The following is a 688-amino-acid chain: DNA ligase (688 aa).

NAD(+)-binding positions include Asp38–Asp42, Ser87–Leu88, and Glu118. Residue Lys120 is the N6-AMP-lysine intermediate of the active site. 4 residues coordinate NAD(+): Arg141, Glu175, Lys291, and Lys315. Zn(2+)-binding residues include Cys409, Cys412, Cys428, and Cys433. A BRCT domain is found at Met590–Glu679.

Belongs to the NAD-dependent DNA ligase family. LigA subfamily. Requires Mg(2+) as cofactor. Mn(2+) is required as a cofactor.

It catalyses the reaction NAD(+) + (deoxyribonucleotide)n-3'-hydroxyl + 5'-phospho-(deoxyribonucleotide)m = (deoxyribonucleotide)n+m + AMP + beta-nicotinamide D-nucleotide.. DNA ligase that catalyzes the formation of phosphodiester linkages between 5'-phosphoryl and 3'-hydroxyl groups in double-stranded DNA using NAD as a coenzyme and as the energy source for the reaction. It is essential for DNA replication and repair of damaged DNA. In Thermotoga petrophila (strain ATCC BAA-488 / DSM 13995 / JCM 10881 / RKU-1), this protein is DNA ligase.